Here is a 222-residue protein sequence, read N- to C-terminus: Histidine biosynthesis bifunctional protein HisIE (222 aa).

Residues 1–128 form a phosphoribosyl-AMP cyclohydrolase region; it reads MQPLSPAFID…SLTLPPPMDA (128 aa). Positions 129-222 are phosphoribosyl-ATP pyrophosphohydrolase; that stretch reads CSELFRVIDQ…ANRRGAPRRN (94 aa).

In the N-terminal section; belongs to the PRA-CH family. The protein in the C-terminal section; belongs to the PRA-PH family.

Its subcellular location is the cytoplasm. It catalyses the reaction 1-(5-phospho-beta-D-ribosyl)-ATP + H2O = 1-(5-phospho-beta-D-ribosyl)-5'-AMP + diphosphate + H(+). The catalysed reaction is 1-(5-phospho-beta-D-ribosyl)-5'-AMP + H2O = 1-(5-phospho-beta-D-ribosyl)-5-[(5-phospho-beta-D-ribosylamino)methylideneamino]imidazole-4-carboxamide. Its pathway is amino-acid biosynthesis; L-histidine biosynthesis; L-histidine from 5-phospho-alpha-D-ribose 1-diphosphate: step 2/9. It functions in the pathway amino-acid biosynthesis; L-histidine biosynthesis; L-histidine from 5-phospho-alpha-D-ribose 1-diphosphate: step 3/9. This Prochlorococcus marinus (strain MIT 9313) protein is Histidine biosynthesis bifunctional protein HisIE.